Reading from the N-terminus, the 533-residue chain is MGNCCASPGSETGSKKGKPKIKSNPFYSEAYTTNGSGTGFKLSVLKDPTGHDISLMYDLGREVGRGEFGITYLCTDIKTGEKYACKSISKKKLRTAVDIEDVRREVEIMKHMPRHPNIVSLKDAFEDDDAVHIVMELCEGGELFDRIVARGHYTERAAAAVMKTILEVVQICHKHGVMHRDLKPENFLFANKKETSALKAIDFGLSVFFKPGEGFNEIVGSPYYMAPEVLRRNYGPEVDIWSAGVILYILLCGVPPFWAETEQGVAQAIIRSVIDFKRDPWPRVSETAKDLVRKMLEPDPKKRLSAAQVLEHSWIQNAKKAPNVSLGETVKARLKQFSVMNKLKKRALRVIAEHLSVEEVAGIKEAFEMMDSKKTGKINLEELKFGLHKLGQQQIPDTDLQILMEAADVDGDGTLNYGEFVAVSVHLKKMANDEHLHKAFSFFDQNQSDYIEIEELREALNDEVDTNSEEVVAAIMQDVDTDKDGRISYEEFAAMMKAGTDWRKASRQYSRERFNSLSLKLMREGSLQLEGEN.

Residues 1 to 21 (MGNCCASPGSETGSKKGKPKI) are disordered. The N-myristoyl glycine moiety is linked to residue G2. The 259-residue stretch at 57–315 (YDLGREVGRG…AAQVLEHSWI (259 aa)) folds into the Protein kinase domain. ATP is bound by residues 63–71 (VGRGEFGIT) and K86. The active-site Proton acceptor is D181. S221 is modified (phosphoserine). An autoinhibitory domain region spans residues 321 to 351 (APNVSLGETVKARLKQFSVMNKLKKRALRVI). 4 consecutive EF-hand domains span residues 358–394 (EEVA…GQQQ), 395–430 (IPDT…LKKM), 431–466 (ANDE…EVDT), and 467–502 (NSEE…GTDW). Residues D371, T375, K377, E382, D408, D410, D412, T414, E419, D444, N446, S448, Y450, E455, D480, D482, D484, and R486 each contribute to the Ca(2+) site. S488 carries the post-translational modification Phosphoserine. E491 serves as a coordination point for Ca(2+). S526 carries the post-translational modification Phosphoserine.

The protein belongs to the protein kinase superfamily. Ser/Thr protein kinase family. CDPK subfamily.

Its subcellular location is the cell membrane. The catalysed reaction is L-seryl-[protein] + ATP = O-phospho-L-seryl-[protein] + ADP + H(+). The enzyme catalyses L-threonyl-[protein] + ATP = O-phospho-L-threonyl-[protein] + ADP + H(+). Activated by calcium. Autophosphorylation may play an important role in the regulation of the kinase activity. May play a role in signal transduction pathways that involve calcium as a second messenger. This Arabidopsis thaliana (Mouse-ear cress) protein is Calcium-dependent protein kinase 8 (CPK8).